The chain runs to 118 residues: Secreted effector CSEP0064 (118 aa).

The first 21 residues, 1-21 (MRPFQLLSALAIFINLEAVEA), serve as a signal peptide directing secretion. A disulfide bond links C27 and C113.

As to quaternary structure, interacts in planta with the pathogenesis-related protein PR10.

The protein localises to the secreted. The protein resides in the host cell. Its function is as follows. Secreted effector that increases susceptibility to infection in both monocotyledonous and dicotyledonous plants. Non-catalytic homolog of fungal RNases that binds host RNA and inhibits the degradation of host ribosomal RNA induced by ribosome-inactivating proteins (RIPs), preventing host cell death, an inviable interaction and demise of the fungus. The sequence is that of Secreted effector CSEP0064 from Blumeria graminis f. sp. hordei (strain DH14) (Barley powdery mildew).